The sequence spans 286 residues: Nucleotide-binding protein APL_0334 (286 aa).

ATP is bound at residue 8-15; that stretch reads GRSGSGKS. 56–59 provides a ligand contact to GTP; that stretch reads DIRN.

It belongs to the RapZ-like family.

In terms of biological role, displays ATPase and GTPase activities. This is Nucleotide-binding protein APL_0334 from Actinobacillus pleuropneumoniae serotype 5b (strain L20).